The primary structure comprises 285 residues: uncharacterized protein (285 aa).

Mn(2+)-binding residues include His110, Asp131, His133, Asp135, Asp214, and Asp216.

Belongs to the arginase family. The cofactor is Mn(2+).

This is an uncharacterized protein from Methanothermus fervidus.